The following is a 459-amino-acid chain: Vacuolar amino acid transporter 5 (459 aa).

The next 8 helical transmembrane spans lie at 8-28, 33-53, 82-102, 131-151, 161-181, 206-226, 240-260, and 278-298; these read GVLT…PFAF, LMPG…GLLL, VVFD…YLII, FLDR…PLCF, ASMI…YHFV, LTTL…FSVI, IPIF…GTGY, and SIST…AFPL. Residues 335–351 are compositionally biased toward polar residues; the sequence is FNSEDPQEAPTQQNNEE. A disordered region spans residues 335-354; it reads FNSEDPQEAPTQQNNEEPNL. A run of 3 helical transmembrane segments spans residues 364–384, 386–406, and 434–454; these read IITL…TSLA, VLAI…PGLF, and LSLF…IVFL.

This sequence belongs to the amino acid/polyamine transporter 2 family.

It is found in the vacuole membrane. Functionally, probable amino acid transporter of unknown specificity. This is Vacuolar amino acid transporter 5 (AVT5) from Saccharomyces cerevisiae (strain ATCC 204508 / S288c) (Baker's yeast).